The following is a 324-amino-acid chain: MKNVAIVSGGYSSECVISLKSAEEVYLSIDKTRYNPYIVLITRNGWTVQGGNKTEFPINKNDFSFIYKGKQIRFDFAYIIIHGTPGEDGLLQGYLDILNIPYSCCGVLSASITFNKYFCNNYLRGFGVETAKSILLKQREQIISPERIIDKLGLPLIVKPNDGGSSFGVTKVTNITQIQLAIRNAFNEGEGVLIESFIPGTEITCGYYKTKNKQVTLPITEIISKNDFFDFEAKYNPGMVEEITPARISKKLTDEIQTLTAHIYDWVGAKGIIRIDYIISPKKEIKMLEVNTIPGMTATSFIPQQIRAAGLNLKEILTEIIESI.

The region spanning 120–322 is the ATP-grasp domain; that stretch reads NNYLRGFGVE…LKEILTEIIE (203 aa). Residue 149–204 participates in ATP binding; that stretch reads IDKLGLPLIVKPNDGGSSFGVTKVTNITQIQLAIRNAFNEGEGVLIESFIPGTEIT. 3 residues coordinate Mg(2+): aspartate 276, glutamate 289, and asparagine 291.

The protein belongs to the D-alanine--D-alanine ligase family. Requires Mg(2+) as cofactor. Mn(2+) serves as cofactor.

The protein resides in the cytoplasm. The catalysed reaction is 2 D-alanine + ATP = D-alanyl-D-alanine + ADP + phosphate + H(+). The protein operates within cell wall biogenesis; peptidoglycan biosynthesis. Its function is as follows. Cell wall formation. This Azobacteroides pseudotrichonymphae genomovar. CFP2 protein is D-alanine--D-alanine ligase.